The following is a 217-amino-acid chain: Ribosomal RNA small subunit methyltransferase G (217 aa).

S-adenosyl-L-methionine-binding positions include Gly-78, Phe-83, 129–130 (GE), and Arg-146.

Belongs to the methyltransferase superfamily. RNA methyltransferase RsmG family.

It localises to the cytoplasm. It catalyses the reaction guanosine(527) in 16S rRNA + S-adenosyl-L-methionine = N(7)-methylguanosine(527) in 16S rRNA + S-adenosyl-L-homocysteine. In terms of biological role, specifically methylates the N7 position of guanine in position 527 of 16S rRNA. This chain is Ribosomal RNA small subunit methyltransferase G, found in Geobacter sulfurreducens (strain ATCC 51573 / DSM 12127 / PCA).